Reading from the N-terminus, the 238-residue chain is Cysteine-rich venom protein (238 aa).

Residues 1–19 (MIAFIVLLSLAAVLQQSSG) form the signal peptide. Residues 20 to 27 (TVDFASES) constitute a propeptide that is removed on maturation. In terms of domain architecture, SCP spans 39–164 (KKHNALRRSV…PTKYLYVCQY (126 aa)). Disulfide bonds link Cys75-Cys153, Cys92-Cys165, Cys148-Cys162, Cys184-Cys191, Cys187-Cys196, Cys200-Cys233, Cys209-Cys227, and Cys218-Cys231. The 34-residue stretch at 200 to 233 (CKREDDYSNCKSLAEKNKCMEEWMKSKCPASCFC) folds into the ShKT domain.

It belongs to the CRISP family. As to expression, expressed by the venom gland.

Its subcellular location is the secreted. Its function is as follows. Blocks olfactory (CNGA2) and retinal (CNGA1) cyclic nucleotide-gated (CNG) ion channel currents. Does not inhibit retinal (CNGA3) currents. It forms high-affinity contacts with the pore turret region and most likely inhibits CNG channel current by blocking the external entrance to the transmembrane pore. Does not affect neither depolarization- nor caffeine-induced contraction arterial smooth muscle. This is Cysteine-rich venom protein from Demansia vestigiata (Lesser black whip snake).